A 128-amino-acid polypeptide reads, in one-letter code: Small ribosomal subunit protein uS13 (128 aa).

The segment covering Gly-95–Val-118 has biased composition (basic residues). Positions Gly-95 to Ala-128 are disordered.

The protein belongs to the universal ribosomal protein uS13 family. Part of the 30S ribosomal subunit. Forms a loose heterodimer with protein S19. Forms two bridges to the 50S subunit in the 70S ribosome.

Located at the top of the head of the 30S subunit, it contacts several helices of the 16S rRNA. In the 70S ribosome it contacts the 23S rRNA (bridge B1a) and protein L5 of the 50S subunit (bridge B1b), connecting the 2 subunits; these bridges are implicated in subunit movement. Contacts the tRNAs in the A and P-sites. This is Small ribosomal subunit protein uS13 from Anaeromyxobacter sp. (strain K).